Here is a 213-residue protein sequence, read N- to C-terminus: Ras-related protein Rab-4A (213 aa).

GTP is bound by residues Gly-18, Thr-19, Gly-20, Lys-21, Ser-22, Cys-23, Ser-37, His-39, and Thr-40. Ser-22 provides a ligand contact to Mg(2+). Residues 39 to 44 (HTIGVE) carry the Switch 1 motif. Mg(2+)-binding residues include Thr-40 and Asp-63. A Switch 2 motif is present at residues 65 to 74 (AGQERFRSVT). Residues Gly-66, Asn-121, Lys-122, Asp-124, Ala-152, and Leu-153 each coordinate GTP. Residues Cys-211 and Cys-213 are each lipidated (S-geranylgeranyl cysteine). Residue Cys-213 is modified to Cysteine methyl ester.

The protein belongs to the small GTPase superfamily. Rab family. Requires Mg(2+) as cofactor.

It localises to the membrane. It is found in the cytoplasm. The protein localises to the early endosome membrane. Its subcellular location is the recycling endosome membrane. The enzyme catalyses GTP + H2O = GDP + phosphate + H(+). With respect to regulation, regulated by guanine nucleotide exchange factors (GEFs) which promote the exchange of bound GDP for free GTP. Regulated by GTPase activating proteins (GAPs) which increase the GTP hydrolysis activity. Inhibited by GDP dissociation inhibitors (GDIs). Functionally, the small GTPases Rab are key regulators of intracellular membrane trafficking, from the formation of transport vesicles to their fusion with membranes. Rabs cycle between an inactive GDP-bound form and an active GTP-bound form that is able to recruit to membranes different sets of downstream effectors directly responsible for vesicle formation, movement, tethering and fusion. RAB4A is involved in protein transport. Also plays a role in vesicular traffic. Mediates VEGFR2 endosomal trafficking to enhance VEGFR2 signaling. Acts as a regulator of platelet alpha-granule release during activation and aggregation of platelets. This is Ras-related protein Rab-4A (rab4a) from Danio rerio (Zebrafish).